The primary structure comprises 234 residues: (5-formylfuran-3-yl)methyl phosphate synthase (234 aa).

The Schiff-base intermediate with substrate role is filled by K27. The active-site Proton acceptor is K85.

The protein belongs to the MfnB family.

The enzyme catalyses 2 D-glyceraldehyde 3-phosphate = 4-(hydroxymethyl)-2-furancarboxaldehyde phosphate + phosphate + 2 H2O. Its pathway is cofactor biosynthesis; methanofuran biosynthesis. Catalyzes the formation of 4-(hydroxymethyl)-2-furancarboxaldehyde phosphate (4-HFC-P) from two molecules of glyceraldehyde-3-P (GA-3-P). The sequence is that of (5-formylfuran-3-yl)methyl phosphate synthase from Methanosarcina mazei (strain ATCC BAA-159 / DSM 3647 / Goe1 / Go1 / JCM 11833 / OCM 88) (Methanosarcina frisia).